Here is a 1269-residue protein sequence, read N- to C-terminus: Protein strawberry notch homolog 1 (1269 aa).

A disordered region spans residues Asn21–Pro47. Lys113 bears the N6-acetyllysine mark. Phosphoserine occurs at positions 126 and 178. Lys377 is subject to N6-acetyllysine. The interval Pro652 to Glu725 is disordered. Phosphoserine is present on residues Ser656, Ser657, and Ser661. Residues Ser679–Tyr693 are compositionally biased toward acidic residues. Phosphoserine occurs at positions 700 and 701. A coiled-coil region spans residues Thr719 to Pro746. N6-acetyllysine is present on Lys1098. Ser1262 carries the post-translational modification Phosphoserine.

This sequence belongs to the SBNO family.

Its subcellular location is the nucleus. In terms of biological role, plays a crucial role in the regulation of neural stem cells (NSCs) proliferation. Enhances the phosphorylation of GSK3B through the PI3K-Akt signaling pathway, thereby upregulating the Wnt/beta-catenin signaling pathway and promoting the proliferation of NSCs. Improves ischemic stroke recovery while inhibiting neuroinflammation through small extracellular vesicles (sEVs)-mediated mechanism. Enhances the secretion of sEVs from NSCs, which in turn inhibit both the MAPK and NF-kappaB pathways in microglia. This inhibition suppresses the pro-inflammatory M1 polarization of microglia, promoting a shift towards the M2 anti-inflammatory phenotype, which is beneficial for reducing neuroinflammation. This is Protein strawberry notch homolog 1 (Sbno1) from Rattus norvegicus (Rat).